The sequence spans 488 residues: Multidrug resistance outer membrane protein MdtP (488 aa).

The signal sequence occupies residues 1 to 23 (MINRQLSRLLLCSILGSTTLISG). Cys24 carries N-palmitoyl cysteine lipidation. The S-diacylglycerol cysteine moiety is linked to residue Cys24.

It belongs to the outer membrane factor (OMF) (TC 1.B.17) family. Could be part of a tripartite efflux system composed of MdtN, MdtO and MdtP.

Its subcellular location is the cell outer membrane. Its function is as follows. Could be involved in resistance to puromycin, acriflavine and tetraphenylarsonium chloride. The protein is Multidrug resistance outer membrane protein MdtP (mdtP) of Escherichia coli O157:H7.